The primary structure comprises 490 residues: tRNA-2-methylthio-N(6)-dimethylallyladenosine synthase (490 aa).

The MTTase N-terminal domain occupies 37–154; it reads KKVYIATQGC…LPELYDKSTT (118 aa). [4Fe-4S] cluster contacts are provided by C46, C83, C117, C198, C202, and C205. The region spanning 184–416 is the Radical SAM core domain; sequence KVEGYRAFVS…QKVIRDSTLK (233 aa). A TRAM domain is found at 419-487; the sequence is EEMVGKTLRV…PHMVRGELVD (69 aa).

Belongs to the methylthiotransferase family. MiaB subfamily. In terms of assembly, monomer. [4Fe-4S] cluster is required as a cofactor.

Its subcellular location is the cytoplasm. The enzyme catalyses N(6)-dimethylallyladenosine(37) in tRNA + (sulfur carrier)-SH + AH2 + 2 S-adenosyl-L-methionine = 2-methylsulfanyl-N(6)-dimethylallyladenosine(37) in tRNA + (sulfur carrier)-H + 5'-deoxyadenosine + L-methionine + A + S-adenosyl-L-homocysteine + 2 H(+). Catalyzes the methylthiolation of N6-(dimethylallyl)adenosine (i(6)A), leading to the formation of 2-methylthio-N6-(dimethylallyl)adenosine (ms(2)i(6)A) at position 37 in tRNAs that read codons beginning with uridine. The protein is tRNA-2-methylthio-N(6)-dimethylallyladenosine synthase of Psychrobacter sp. (strain PRwf-1).